The sequence spans 297 residues: Heme A synthase (297 aa).

Residues 1 to 6 (MHKRLK) are Cytoplasmic-facing. A helical membrane pass occupies residues 7–27 (IYSVITSIGVLIVLLQGALVT). At 28-62 (KTGSGEGCGATWPLCFGEVIPTNPAIETIIEYSHR) the chain is on the extracellular side. The cysteines at positions 35 and 42 are disulfide-linked. E58 is an active-site residue. H61 contacts heme o. Residues 63 to 83 (IVSGLVGAMIIILAIWAWKQL) traverse the membrane as a helical segment. The Cytoplasmic segment spans residues 84–93 (KHMREAKALS). Residues 94–114 (FAAVILIIFQGLLGAGAVVFG) form a helical membrane-spanning segment. Residues 115-118 (QSKA) lie on the Extracellular side of the membrane. Residues 119–139 (ILALHFGISAMSLAAVVLLTI) traverse the membrane as a helical segment. H123 lines the heme o pocket. The Cytoplasmic segment spans residues 140-156 (LAFEDGREHTMAPKVSR). A helical membrane pass occupies residues 157–177 (GFKYYVFFVITYCYAVIYSGA). The Extracellular segment spans residues 178 to 210 (YVKHSEATLACAGFPLCNGQIFPGLYGPVGAHY). C188 and C194 are oxidised to a cystine. Residues 211–231 (FHRVVGTILLLFLLILMIWTL) form a helical membrane-spanning segment. H212 serves as a coordination point for heme b. Over 232–242 (SRYRHYRVLTW) the chain is Cytoplasmic. A helical membrane pass occupies residues 243 to 263 (TAVLSFLLVVGQFISGISIVF). Residues 264 to 271 (TQNALSVG) are Extracellular-facing. The helical transmembrane segment at 272 to 292 (LIHALIISILFSALSYMTMII) threads the bilayer. Residue H274 participates in heme b binding. At 293-297 (TRPSH) the chain is on the cytoplasmic side.

Belongs to the COX15/CtaA family. Type 1 subfamily. Interacts with CtaB. It depends on heme b as a cofactor.

It localises to the cell membrane. It carries out the reaction Fe(II)-heme o + 2 A + H2O = Fe(II)-heme a + 2 AH2. Its pathway is porphyrin-containing compound metabolism; heme A biosynthesis; heme A from heme O: step 1/1. Catalyzes the conversion of heme O to heme A by two successive hydroxylations of the methyl group at C8. The first hydroxylation forms heme I, the second hydroxylation results in an unstable dihydroxymethyl group, which spontaneously dehydrates, resulting in the formyl group of heme A. In Alkalihalophilus pseudofirmus (strain ATCC BAA-2126 / JCM 17055 / OF4) (Bacillus pseudofirmus), this protein is Heme A synthase.